We begin with the raw amino-acid sequence, 400 residues long: ATP-dependent rRNA helicase RRP3 (400 aa).

A Q motif motif is present at residues 1 to 29 (MEFGDLRIDESLIKTCQEKGITRPTEVQR). The region spanning 32-202 (IPAVLGGGDV…SSILKRPKTI (171 aa)) is the Helicase ATP-binding domain. An ATP-binding site is contributed by 45–52 (SQTGSGKT). A DEAD box motif is present at residues 150–153 (DEAD). The region spanning 229-373 (ALVELLEMSQ…EFKMMKKNFG (145 aa)) is the Helicase C-terminal domain.

This sequence belongs to the DEAD box helicase family. DDX47/RRP3 subfamily. Interacts with the SSU processome.

It is found in the nucleus. The catalysed reaction is ATP + H2O = ADP + phosphate + H(+). Functionally, ATP-dependent rRNA helicase required for pre-ribosomal RNA processing. Involved in the maturation of the 35S-pre-rRNA and to its cleavage to mature 18S rRNA. This is ATP-dependent rRNA helicase RRP3 from Encephalitozoon cuniculi (strain GB-M1) (Microsporidian parasite).